Here is a 603-residue protein sequence, read N- to C-terminus: Mono(2-hydroxyethyl) terephthalate hydrolase (603 aa).

Positions 1 to 17 are cleaved as a signal peptide; it reads MQTTVTTMLLASVALAA. Cys-18 carries the N-palmitoyl cysteine lipid modification. Cys-18 carries the S-diacylglycerol cysteine lipid modification. The tract at residues 24–44 is disordered; it reads TPLPLPQQQPPQQEPPPPPVP. A compositionally biased stretch (pro residues) spans 26–44; it reads LPLPQQQPPQQEPPPPPVP. A disulfide bridge links Cys-51 with Cys-92. Gly-132 contributes to the 4-[(2-hydroxyethoxy)carbonyl]benzoate binding site. 4 disulfides stabilise this stretch: Cys-224-Cys-529, Cys-303-Cys-320, Cys-340-Cys-348, and Cys-577-Cys-599. Ser-225 functions as the Acyl-ester intermediate in the catalytic mechanism. Glu-226 provides a ligand contact to 4-[(2-hydroxyethoxy)carbonyl]benzoate. Ca(2+)-binding residues include Asp-304, Asp-307, Leu-309, Asp-311, and Ile-313. 4-[(2-hydroxyethoxy)carbonyl]benzoate-binding residues include Arg-411 and Ser-416. Catalysis depends on charge relay system residues Asp-492 and His-528. His-528 is a 4-[(2-hydroxyethoxy)carbonyl]benzoate binding site.

The protein belongs to the tannase family.

The protein localises to the cell outer membrane. It catalyses the reaction 4-[(2-hydroxyethoxy)carbonyl]benzoate + H2O = terephthalate + ethylene glycol + H(+). Functionally, involved in the degradation and assimilation of the plastic poly(ethylene terephthalate) (PET), which allows I.sakaiensis to use PET as its major energy and carbon source for growth. Likely acts synergistically with PETase to depolymerize PET. Catalyzes the hydrolysis of mono(2-hydroxyethyl) terephthalate (MHET) into its two environmentally benign monomers, terephthalate and ethylene glycol. Does not show activity against PET, bis(hydroxyethyl) terephthalate (BHET), pNP-aliphatic esters or typical aromatic ester compounds catalyzed by the tannase family enzymes, such as ethyl gallate and ethyl ferulate. The sequence is that of Mono(2-hydroxyethyl) terephthalate hydrolase from Piscinibacter sakaiensis (Ideonella sakaiensis).